A 128-amino-acid polypeptide reads, in one-letter code: Large ribosomal subunit protein bL17 (128 aa).

The protein belongs to the bacterial ribosomal protein bL17 family. As to quaternary structure, part of the 50S ribosomal subunit. Contacts protein L32.

The polypeptide is Large ribosomal subunit protein bL17 (Edwardsiella ictaluri (strain 93-146)).